The chain runs to 267 residues: NAD kinase (267 aa).

The active-site Proton acceptor is the Asp-45. NAD(+) contacts are provided by residues 45 to 46 (DG), 121 to 122 (NE), Arg-147, Asp-149, 160 to 165 (TAYSKS), and Ala-184.

Belongs to the NAD kinase family. A divalent metal cation is required as a cofactor.

The protein resides in the cytoplasm. The enzyme catalyses NAD(+) + ATP = ADP + NADP(+) + H(+). Involved in the regulation of the intracellular balance of NAD and NADP, and is a key enzyme in the biosynthesis of NADP. Catalyzes specifically the phosphorylation on 2'-hydroxyl of the adenosine moiety of NAD to yield NADP. The sequence is that of NAD kinase from Lactobacillus acidophilus (strain ATCC 700396 / NCK56 / N2 / NCFM).